A 122-amino-acid polypeptide reads, in one-letter code: UPF0738 protein YjbL (122 aa).

It belongs to the UPF0738 family.

The polypeptide is UPF0738 protein YjbL (yjbL) (Bacillus subtilis (strain 168)).